We begin with the raw amino-acid sequence, 182 residues long: Crossover junction endodeoxyribonuclease RuvC (182 aa).

Residues D7, E68, and D141 contribute to the active site. The Mg(2+) site is built by D7, E68, and D141.

Belongs to the RuvC family. In terms of assembly, homodimer which binds Holliday junction (HJ) DNA. The HJ becomes 2-fold symmetrical on binding to RuvC with unstacked arms; it has a different conformation from HJ DNA in complex with RuvA. In the full resolvosome a probable DNA-RuvA(4)-RuvB(12)-RuvC(2) complex forms which resolves the HJ. Requires Mg(2+) as cofactor.

It localises to the cytoplasm. The catalysed reaction is Endonucleolytic cleavage at a junction such as a reciprocal single-stranded crossover between two homologous DNA duplexes (Holliday junction).. Its function is as follows. The RuvA-RuvB-RuvC complex processes Holliday junction (HJ) DNA during genetic recombination and DNA repair. Endonuclease that resolves HJ intermediates. Cleaves cruciform DNA by making single-stranded nicks across the HJ at symmetrical positions within the homologous arms, yielding a 5'-phosphate and a 3'-hydroxyl group; requires a central core of homology in the junction. The consensus cleavage sequence is 5'-(A/T)TT(C/G)-3'. Cleavage occurs on the 3'-side of the TT dinucleotide at the point of strand exchange. HJ branch migration catalyzed by RuvA-RuvB allows RuvC to scan DNA until it finds its consensus sequence, where it cleaves and resolves the cruciform DNA. The chain is Crossover junction endodeoxyribonuclease RuvC from Thermobifida fusca (strain YX).